The chain runs to 646 residues: Glutamine--tRNA ligase protein virJ (646 aa).

A disordered region spans residues 25-65 (NELKKRIQKRARKAAAAANRSNAQQEKGNKPAANKPAAKPE). Positions 38 to 61 (AAAAANRSNAQQEKGNKPAANKPA) are enriched in low complexity. A 'HIGH' region motif is present at residues 98–108 (PEPNGYLHLGH). ATP contacts are provided by residues 99 to 101 (EPN) and 105 to 111 (HLGHAKA). The L-glutamine site is built by Asp-147 and Tyr-296. ATP-binding positions include Thr-315, 344 to 345 (RL), and 352 to 354 (MSK). A 'KMSKS' region motif is present at residues 351-355 (IMSKR).

Belongs to the class-I aminoacyl-tRNA synthetase family.

The catalysed reaction is tRNA(Gln) + L-glutamine + ATP = L-glutaminyl-tRNA(Gln) + AMP + diphosphate. In terms of biological role, glutamine--tRNA ligase; part of the gene cluster that mediates the biosynthesis of virensols and trichoxide, fungal natural products that contain or are derived from a salicylaldehyde core. VirJ does not seem to play any role in virensols and trichoxide biosynthesis. The chain is Glutamine--tRNA ligase protein virJ from Hypocrea virens (strain Gv29-8 / FGSC 10586) (Gliocladium virens).